We begin with the raw amino-acid sequence, 246 residues long: tRNA (guanine-N(1)-)-methyltransferase (246 aa).

S-adenosyl-L-methionine contacts are provided by residues G112 and 131 to 136; that span reads IGDYVL.

Belongs to the RNA methyltransferase TrmD family. Homodimer.

It localises to the cytoplasm. The enzyme catalyses guanosine(37) in tRNA + S-adenosyl-L-methionine = N(1)-methylguanosine(37) in tRNA + S-adenosyl-L-homocysteine + H(+). Functionally, specifically methylates guanosine-37 in various tRNAs. The chain is tRNA (guanine-N(1)-)-methyltransferase from Fervidobacterium nodosum (strain ATCC 35602 / DSM 5306 / Rt17-B1).